Here is a 95-residue protein sequence, read N- to C-terminus: Alpha-conotoxin-like Ms20.4 (95 aa).

The N-terminal stretch at 1–24 is a signal peptide; the sequence is MPKLAVVLLVLLILPLSYFDVAGG. Positions 25-45 are excised as a propeptide; sequence QAAEGDRRGNGLARYPQRGGR. 4-carboxyglutamate is present on glutamate 50. Proline 56 is modified (4-hydroxyproline). 4 disulfides stabilise this stretch: cysteine 64–cysteine 73, cysteine 69–cysteine 81, cysteine 74–cysteine 91, and cysteine 79–cysteine 93.

It belongs to the conotoxin D superfamily. As to quaternary structure, hetero-, homo- or pseudo-homodimer (identical sequence, different post-translational modifications). Heterodimer of [carboxy'Glu-48', hydroxy'Pro-54']Ms20.1 and [carboxyGlu-50, hydroxyPro-56]Ms20.4 may exist. Expressed by the venom duct.

Its subcellular location is the secreted. Its function is as follows. Alpha-conotoxins act on postsynaptic membranes, they bind to the nicotinic acetylcholine receptors (nAChR) and thus inhibit them. Through its two C-terminal domains, this homodimeric protein would bind to two nAChR allosteric sites, located outside the nAChR C-loop of the principal binding face and at the adjacent binding interface in a clockwise direction. This toxin specifically blocks mammalian neuronal nAChR of the alpha-7/CHRNA7, alpha-3-beta-2/CHRNA3-CHRNB2 and alpha-4-beta-2/CHRNA4-CHRNB2 subtypes. This Conus mustelinus (Weasel cone) protein is Alpha-conotoxin-like Ms20.4.